The following is a 100-amino-acid chain: Large ribosomal subunit protein uL23 (100 aa).

This sequence belongs to the universal ribosomal protein uL23 family. Part of the 50S ribosomal subunit. Contacts protein L29, and trigger factor when it is bound to the ribosome.

Functionally, one of the early assembly proteins it binds 23S rRNA. One of the proteins that surrounds the polypeptide exit tunnel on the outside of the ribosome. Forms the main docking site for trigger factor binding to the ribosome. This Novosphingobium aromaticivorans (strain ATCC 700278 / DSM 12444 / CCUG 56034 / CIP 105152 / NBRC 16084 / F199) protein is Large ribosomal subunit protein uL23.